The sequence spans 535 residues: MAKKVAVIGAGVSGLISLKCCVDEGLEPTCFERTEDIGGLWRFKENVEDGRASIYQSVITNTSKEMSCFSDFPMPEDFPNFLHNSKLLEYFRIFAKKFDLLKYIQFQTTVISVKKRPDFASSGQWEVVTQSNSKQQSAVFDAVMVCSGHHILPNIPLKSFPGIEKFKGQYFHSRQYKHPAGLEGKRILVIGIGNSASDIAVELSKKAAQVYISTRKGSWVMSRISEDGYPWDMVFHTRFSSMLRNVLPRMIVKWMMEQQMNRWFNHENYGLAPENKYLMKEPVLNDDLPSRILYGTIKVKRRVKELTESAAIFEDGTVEEDIDVIVFATGYTFAFPFLEESLVKIEDNMVSLYKYMFPPQLEKSTFACLGLIQPLGSIFPTVELQARWATRVFKGLCSLPSKETMMADIIKRNENRIALFGESLSQKLQTNYIDYLDELALEIGAKPDLVSFLFKDPKLAVKLYFGPCNSYQYRLVGPGQWEGARNAIFTQKQRILKPLKTRTLKASSNFPVSFLLKFLGLFALVLAFLFQLQWF.

A2 carries the post-translational modification N-acetylalanine. Residues 9–13 (GAGVS), E32, 40–41 (LW), and 61–62 (NT) contribute to the FAD site. NADP(+) contacts are provided by residues 60–61 (TN) and 195–198 (SASD). K492 is covalently cross-linked (Glycyl lysine isopeptide (Lys-Gly) (interchain with G-Cter in SUMO)). A helical membrane pass occupies residues 510–530 (FPVSFLLKFLGLFALVLAFLF).

It belongs to the FMO family. It depends on FAD as a cofactor. Mg(2+) serves as cofactor. Lung.

The protein localises to the microsome membrane. It is found in the endoplasmic reticulum membrane. It carries out the reaction N,N-dimethylaniline + NADPH + O2 + H(+) = N,N-dimethylaniline N-oxide + NADP(+) + H2O. Its function is as follows. Catalyzes the oxidative metabolism of numerous xenobiotics, including mainly therapeutic drugs and insecticides that contain a soft nucleophile, most commonly nitrogen and sulfur and participates to their bioactivation. Most drug substrates are tertiary amines such as prochlorperazine and trifluoperazine which are N-oxygenated to form the N-oxide, or sulfides such as thiourea and ethionamide, which are S-oxygenated to the sulfoxide. Others include primary alkylamines such as N-dodecylamine and octan-1-amine that are sequentially monooxygenated to oximes through intermediate hydroxylamines and both steps are NADPH- and oxygen-dependent. Also metabolized N-Deacetyl ketoconazole (DAK) to N-hydroxy-DAK and appears to further metabolizes N-hydroxy-DAK to two others metabolites. Also catalyzes S-oxygenation of the thioether-containing organophosphate insecticides, phorate and disulfoton. This chain is Dimethylaniline monooxygenase [N-oxide-forming] 2, found in Oryctolagus cuniculus (Rabbit).